The following is a 488-amino-acid chain: MPGGRRGPSRQQLSRSALPSLQTLVGGMCGNGTGLRNRNGSAIGLSAPPITALITPEPVRHCHIPELPVDGGLVFEFLFFIYLLVTLFTQYINIYKTVWWYPYNHPASCTSLNFHLIDYHLAAFITVMLARRLVWALISQASQVGTSSVVKYSALIIGRLVLLTLCGWIFCWTTVNLFRNHSVLNLLFLGYPFGVYVPLCCFHQDNRSQPLPTDCGYLVPDSLVHEGANGVGGLVRPKDFLSLLRESLREQFNSPPSIPSHSCPLSPDLIRNEVECLKSDFNRRIKEVLFNSLFSAYYVAFLPLCFVKSTQYYDMRWSCEHLIMVWINAFVMLSTQLLPPKYCDLLHRSASHLGKWQKLEHGSYSNAPQHVWSENTVWPQGVLVRHSRSLYKAVGSYNVAVPSEISHARFYFLFHRPLRLLNLLLVIEGSLVLYQLYSLLRAEKWNHTLSIALILFCNYYVLFKLLRDRIVLGRAYSYPLSSYGLKPH.

2 N-linked (GlcNAc...) asparagine glycosylation sites follow: Asn-31 and Asn-39. Transmembrane regions (helical) follow at residues 72-92 (GLVF…TQYI), 110-130 (TSLN…VMLA), and 155-175 (LIIG…WTTV). A glycan (N-linked (GlcNAc...) asparagine) is linked at Asn-180. Residues 182–202 (SVLNLLFLGYPFGVYVPLCCF) form a helical membrane-spanning segment. A glycan (N-linked (GlcNAc...) asparagine) is linked at Asn-206. The next 4 helical transmembrane spans lie at 287-307 (EVLF…LCFV), 319-339 (CEHL…QLLP), 420-440 (LLNL…YSLL), and 446-466 (NHTL…FKLL).

This sequence belongs to the TMEM39 family.

It localises to the membrane. The protein is Transmembrane protein 39A-B (tmem39a-b) of Xenopus laevis (African clawed frog).